The chain runs to 380 residues: Queuine tRNA-ribosyltransferase (380 aa).

Aspartate 93 (proton acceptor) is an active-site residue. Substrate-binding positions include 93–97 (DSGGF), aspartate 147, glutamine 198, and glycine 225. The tract at residues 256 to 262 (GVGLPSN) is RNA binding. The Nucleophile role is filled by aspartate 275. Positions 280-284 (ARNGR) are RNA binding; important for wobble base 34 recognition. 4 residues coordinate Zn(2+): cysteine 313, cysteine 315, cysteine 318, and histidine 344.

The protein belongs to the queuine tRNA-ribosyltransferase family. Homodimer. Within each dimer, one monomer is responsible for RNA recognition and catalysis, while the other monomer binds to the replacement base PreQ1. Zn(2+) serves as cofactor.

It carries out the reaction 7-aminomethyl-7-carbaguanine + guanosine(34) in tRNA = 7-aminomethyl-7-carbaguanosine(34) in tRNA + guanine. Its pathway is tRNA modification; tRNA-queuosine biosynthesis. Functionally, catalyzes the base-exchange of a guanine (G) residue with the queuine precursor 7-aminomethyl-7-deazaguanine (PreQ1) at position 34 (anticodon wobble position) in tRNAs with GU(N) anticodons (tRNA-Asp, -Asn, -His and -Tyr). Catalysis occurs through a double-displacement mechanism. The nucleophile active site attacks the C1' of nucleotide 34 to detach the guanine base from the RNA, forming a covalent enzyme-RNA intermediate. The proton acceptor active site deprotonates the incoming PreQ1, allowing a nucleophilic attack on the C1' of the ribose to form the product. After dissociation, two additional enzymatic reactions on the tRNA convert PreQ1 to queuine (Q), resulting in the hypermodified nucleoside queuosine (7-(((4,5-cis-dihydroxy-2-cyclopenten-1-yl)amino)methyl)-7-deazaguanosine). In Clostridium perfringens (strain 13 / Type A), this protein is Queuine tRNA-ribosyltransferase.